The chain runs to 453 residues: Exopolyphosphatase PRUNE1 (453 aa).

M1 is modified (N-acetylmethionine). Positions 28, 30, 106, and 179 each coordinate Mn(2+). The DHH motif signature appears at 106-108 (DHH). The tract at residues 393 to 420 (SLISGLSQDEEDPPLPPTPMNSLVDECP) is essential for homodimerization. Residues 395–421 (ISGLSQDEEDPPLPPTPMNSLVDECPL) form a disordered region. S399 is subject to Phosphoserine. T410 carries the phosphothreonine modification. The residue at position 414 (S414) is a Phosphoserine.

Belongs to the PPase class C family. Prune subfamily. Homooligomer. Able to homodimerize via its C-terminal domain. Interacts with NME1. Interacts with GSK3; at focal adhesion complexes where paxillin and vinculin are colocalized. Interacts with alpha and beta tubulin. Requires Mn(2+) as cofactor. Ubiquitously expressed. Seems to be overexpressed in aggressive sarcoma subtypes, such as leiomyosarcomas and malignant fibrous histiocytomas (MFH) as well as in the less malignant liposarcomas.

It localises to the cytoplasm. Its subcellular location is the nucleus. The protein resides in the cell junction. It is found in the focal adhesion. It carries out the reaction diphosphate + H2O = 2 phosphate + H(+). Activated by magnesium ions and inhibited by manganese ions. Inhibited by dipyridamole, moderately sensitive to IBMX and inhibited by vinpocetine. Phosphodiesterase (PDE) that has higher activity toward cAMP than cGMP, as substrate. Plays a role in cell proliferation, migration and differentiation, and acts as a negative regulator of NME1. Plays a role in the regulation of neurogenesis. Involved in the regulation of microtubule polymerization. In Homo sapiens (Human), this protein is Exopolyphosphatase PRUNE1.